We begin with the raw amino-acid sequence, 1666 residues long: Probable clathrin heavy chain (1666 aa).

WD40-like repeat stretches follow at residues 24–67 (SFGF…RPIS), 68–107 (ADSV…MNQD), 108–148 (VVYW…SSLN), 149–194 (GTQI…QPLE), 195–255 (SHAS…PEAV), 256–299 (NDFP…VSGE), and 300–328 (SIFV…VSIN). Phosphothreonine is present on Thr392. Ser393 carries the post-translational modification Phosphoserine. CHCR repeat units lie at residues 534-680 (MFNS…QIVV), 683-825 (ATRY…DEEL), 830-969 (LMSV…LLDQ), 975-1120 (VPES…IPDA), 1124-1265 (YLKA…FRLA), 1270-1415 (LNLI…MLLT), and 1418-1561 (LAAL…YECF).

This sequence belongs to the clathrin heavy chain family. Clathrin triskelions, composed of 3 heavy chains and 3 light chains, are the basic subunits of the clathrin coat.

It localises to the cytoplasmic vesicle membrane. It is found in the membrane. Its subcellular location is the coated pit. Clathrin is the major protein of the polyhedral coat of coated pits and vesicles. The protein is Probable clathrin heavy chain (chc1) of Schizosaccharomyces pombe (strain 972 / ATCC 24843) (Fission yeast).